Consider the following 143-residue polypeptide: Large ribosomal subunit protein uL11 (143 aa).

The protein belongs to the universal ribosomal protein uL11 family. In terms of assembly, part of the ribosomal stalk of the 50S ribosomal subunit. Interacts with L10 and the large rRNA to form the base of the stalk. L10 forms an elongated spine to which L12 dimers bind in a sequential fashion forming a multimeric L10(L12)X complex. In terms of processing, one or more lysine residues are methylated.

In terms of biological role, forms part of the ribosomal stalk which helps the ribosome interact with GTP-bound translation factors. This is Large ribosomal subunit protein uL11 from Dechloromonas aromatica (strain RCB).